We begin with the raw amino-acid sequence, 190 residues long: Vascular endothelial growth factor A (190 aa).

The signal sequence occupies residues 1 to 26 (MNFLLSWVHWTLALLLYLHHAKWSQA). 3 disulfide bridges follow: Cys-51-Cys-93, Cys-82-Cys-127, and Cys-86-Cys-129. N-linked (GlcNAc...) asparagine glycosylation occurs at Asn-100.

This sequence belongs to the PDGF/VEGF growth factor family. As to quaternary structure, homodimer; disulfide-linked. Also found as heterodimer with PGF. Interacts with NRP1. Interacts with isoform 2 of BSG. Interacts with CD82; this interaction inhibits VEGFA-mediated signaling pathway.

The protein resides in the secreted. Functionally, growth factor active in angiogenesis, vasculogenesis and endothelial cell growth. Induces endothelial cell proliferation, promotes cell migration, inhibits apoptosis and induces permeabilization of blood vessels. Binds to the FLT1/VEGFR1 and KDR/VEGFR2 receptors, heparan sulfate and heparin. Binding to NRP1 receptor initiates a signaling pathway needed for motor neuron axon guidance and cell body migration, including for the caudal migration of facial motor neurons from rhombomere 4 to rhombomere 6 during embryonic development. Also binds the DEAR/FBXW7-AS1 receptor. This chain is Vascular endothelial growth factor A (VEGFA), found in Mesocricetus auratus (Golden hamster).